The chain runs to 215 residues: S-crystallin 2 (215 aa).

The GST N-terminal domain occupies 2–80 (PSYTLNYFNH…YLAREFGFHG (79 aa)). In terms of domain architecture, GST C-terminal spans 82 to 215 (NNMEMARVEY…YLKKRSSTEF (134 aa)).

This sequence belongs to the GST superfamily. As to expression, lens.

S-crystallins are structural components of squids and octopi eye lens. Contains relatively little if any GST activity. This Enteroctopus dofleini (North Pacific giant octopus) protein is S-crystallin 2.